A 321-amino-acid polypeptide reads, in one-letter code: MPVKVIEGLPAIDDLRADNIFVMNDERAKNQNIRPLNLLVVNLMPRKLITERQILRLLSNTPLQINVEFLYMTSHDFKNTKQGHLDSFYKSFSEIKSQYYDGLIVTGAPVEQLNFEEVDYWSELLKIIDWSKSHVYSSLHICWGAQAALYARYGVTKENLPQKLCGIYKSSVEQPKNPLFRGFDDFFNYPQSRYTQSNPSEIKKVPDLEVLSSSKETGFSILAKKNLREIYLFGHLEYDRETLAWEYERDKEEGLKPNLPQNYFPENDDKNKPKSTWASAASLFFSNWLNYAVYQGTPYLGERLSQHLNEENYDFNQKEQK.

C142 (acyl-thioester intermediate) is an active-site residue. K163 and S192 together coordinate substrate. H235 (proton acceptor) is an active-site residue. E237 is an active-site residue. Residue R249 participates in substrate binding.

It belongs to the MetA family.

It is found in the cytoplasm. It catalyses the reaction L-homoserine + acetyl-CoA = O-acetyl-L-homoserine + CoA. It participates in amino-acid biosynthesis; L-methionine biosynthesis via de novo pathway; O-acetyl-L-homoserine from L-homoserine: step 1/1. Functionally, transfers an acetyl group from acetyl-CoA to L-homoserine, forming acetyl-L-homoserine. The chain is Homoserine O-acetyltransferase from Lactococcus lactis subsp. lactis (strain IL1403) (Streptococcus lactis).